The following is a 284-amino-acid chain: Pantothenate synthetase (284 aa).

30–37 (MGALHEGH) is a binding site for ATP. Residue H37 is the Proton donor of the active site. Residue Q61 coordinates (R)-pantoate. Q61 is a binding site for beta-alanine. 147–150 (GEKD) is an ATP binding site. Position 153 (Q153) interacts with (R)-pantoate. ATP-binding positions include V176 and 184 to 187 (TSSR).

It belongs to the pantothenate synthetase family. As to quaternary structure, homodimer.

It is found in the cytoplasm. The catalysed reaction is (R)-pantoate + beta-alanine + ATP = (R)-pantothenate + AMP + diphosphate + H(+). It participates in cofactor biosynthesis; (R)-pantothenate biosynthesis; (R)-pantothenate from (R)-pantoate and beta-alanine: step 1/1. Functionally, catalyzes the condensation of pantoate with beta-alanine in an ATP-dependent reaction via a pantoyl-adenylate intermediate. This Chlorobaculum tepidum (strain ATCC 49652 / DSM 12025 / NBRC 103806 / TLS) (Chlorobium tepidum) protein is Pantothenate synthetase.